The chain runs to 266 residues: Apolipoprotein A-I (266 aa).

Residues methionine 1 to alanine 18 form the signal peptide. Repeat copies occupy residues leucine 67 to glycine 88 and proline 89 to serine 110. The 10 X approximate tandem repeats stretch occupies residues leucine 67 to glutamine 266. Position 109 is a methionine sulfoxide (methionine 109). The 3; half-length repeat unit spans residues lysine 111 to glutamine 121. 5 tandem repeats follow at residues proline 122 to alanine 143, proline 144 to serine 165, proline 166 to alanine 187, proline 188 to glycine 209, and alanine 210 to lysine 231. The 9; half-length repeat unit spans residues proline 232 to leucine 242. Repeat 10 spans residues proline 243–glutamine 266.

It belongs to the apolipoprotein A1/A4/E family. In terms of assembly, homodimer. Interacts with APOA1BP and CLU. Component of a sperm activating protein complex (SPAP), consisting of APOA1, an immunoglobulin heavy chain, an immunoglobulin light chain and albumin. Interacts with NDRG1. Interacts with SCGB3A2. Interacts with NAXE and YJEFN3. In terms of processing, glycosylated. Palmitoylated. Post-translationally, phosphorylation sites are present in the extracellular medium.

It is found in the secreted. Participates in the reverse transport of cholesterol from tissues to the liver for excretion by promoting cholesterol efflux from tissues and by acting as a cofactor for the lecithin cholesterol acyltransferase (LCAT). As part of the SPAP complex, activates spermatozoa motility. This is Apolipoprotein A-I (APOA1) from Acinonyx jubatus (Cheetah).